The following is a 290-amino-acid chain: Porphobilinogen deaminase (290 aa).

Position 237 is an S-(dipyrrolylmethanemethyl)cysteine (C237).

It belongs to the HMBS family. As to quaternary structure, monomer. Requires dipyrromethane as cofactor.

The catalysed reaction is 4 porphobilinogen + H2O = hydroxymethylbilane + 4 NH4(+). The protein operates within porphyrin-containing compound metabolism; protoporphyrin-IX biosynthesis; coproporphyrinogen-III from 5-aminolevulinate: step 2/4. In terms of biological role, tetrapolymerization of the monopyrrole PBG into the hydroxymethylbilane pre-uroporphyrinogen in several discrete steps. In Clostridium botulinum (strain Kyoto / Type A2), this protein is Porphobilinogen deaminase.